The following is a 117-amino-acid chain: Membrane-anchored ubiquitin-fold protein 1 (117 aa).

Residues 8–74 (LEIKFRLTDG…LENSKTVKDY (67 aa)) enclose the Ubiquitin-like domain. Residue C112 is the site of S-palmitoyl cysteine attachment. Position 114 is a cysteine methyl ester (C114). C114 carries S-farnesyl cysteine lipidation. The propeptide at 115 to 117 (SVM) is removed in mature form.

Its subcellular location is the cell membrane. May serve as docking site to facilitate the association of other proteins to the plasma membrane. The sequence is that of Membrane-anchored ubiquitin-fold protein 1 (MUB1) from Arabidopsis thaliana (Mouse-ear cress).